A 283-amino-acid chain; its full sequence is Pantothenate synthetase (283 aa).

ATP is bound at residue 30 to 37 (MGALHEGH). The Proton donor role is filled by His37. Residue Gln61 participates in (R)-pantoate binding. Gln61 provides a ligand contact to beta-alanine. 147-150 (GEKD) lines the ATP pocket. (R)-pantoate is bound at residue Gln153. ATP-binding positions include Val176 and 184–187 (VSSR).

This sequence belongs to the pantothenate synthetase family. As to quaternary structure, homodimer.

The protein localises to the cytoplasm. The catalysed reaction is (R)-pantoate + beta-alanine + ATP = (R)-pantothenate + AMP + diphosphate + H(+). The protein operates within cofactor biosynthesis; (R)-pantothenate biosynthesis; (R)-pantothenate from (R)-pantoate and beta-alanine: step 1/1. Catalyzes the condensation of pantoate with beta-alanine in an ATP-dependent reaction via a pantoyl-adenylate intermediate. This Chlorobium luteolum (strain DSM 273 / BCRC 81028 / 2530) (Pelodictyon luteolum) protein is Pantothenate synthetase.